The following is a 512-amino-acid chain: Cytochrome P450 monooxygenase astB (512 aa).

The helical transmembrane segment at 5–25 threads the bilayer; the sequence is DLSFPAAIGAVFGAVAISVAA. Position 452 (Cys452) interacts with heme.

The protein belongs to the cytochrome P450 family. The cofactor is heme.

Its subcellular location is the membrane. It participates in secondary metabolite biosynthesis; terpenoid biosynthesis. Its function is as follows. Cytochrome P450 monooxygenase; part of the gene cluster that mediates the biosynthesis of the sesquiterpenoid aspterric acid (AA), an inhibitor of dihydroxy-acid dehydratase (DHAD) effective as an herbicide. AstB catalyzes the second step within the pathway and converts (-)-daucane produced by the terpene cyclase astA into an alpha-epoxy carboxylate intermediate which is further converted into the tricyclic aspterric acid by the cytochrome P450 monooxygenase astC. This is Cytochrome P450 monooxygenase astB from Aspergillus terreus (strain NIH 2624 / FGSC A1156).